The chain runs to 384 residues: Deoxyguanosinetriphosphate triphosphohydrolase-like protein (384 aa).

A disordered region spans residues 13–42 (LASYASDPSKTRGRRHSEPPPENRTEFQRD). Residues 28 to 42 (HSEPPPENRTEFQRD) are compositionally biased toward basic and acidic residues. One can recognise an HD domain in the interval 73 to 208 (RLTHSLEVAQ…ANLADEVAYN (136 aa)).

It belongs to the dGTPase family. Type 2 subfamily.

In Bordetella bronchiseptica (strain ATCC BAA-588 / NCTC 13252 / RB50) (Alcaligenes bronchisepticus), this protein is Deoxyguanosinetriphosphate triphosphohydrolase-like protein.